The sequence spans 768 residues: 5-methyltetrahydropteroyltriglutamate--homocysteine methyltransferase (768 aa).

5-methyltetrahydropteroyltri-L-glutamate is bound by residues 17 to 20 and K117; that span reads RELK. Residues 442–444 and E495 each bind L-homocysteine; that span reads IGS. Residues 442–444 and E495 contribute to the L-methionine site; that span reads IGS. Residues 526-527 and W572 contribute to the 5-methyltetrahydropteroyltri-L-glutamate site; that span reads RC. Position 610 (D610) interacts with L-homocysteine. D610 is a binding site for L-methionine. E616 contacts 5-methyltetrahydropteroyltri-L-glutamate. The Zn(2+) site is built by H653, C655, and E677. The active-site Proton donor is H706. Residue C738 coordinates Zn(2+).

This sequence belongs to the vitamin-B12 independent methionine synthase family. Zn(2+) is required as a cofactor.

The enzyme catalyses 5-methyltetrahydropteroyltri-L-glutamate + L-homocysteine = tetrahydropteroyltri-L-glutamate + L-methionine. The protein operates within amino-acid biosynthesis; L-methionine biosynthesis via de novo pathway; L-methionine from L-homocysteine (MetE route): step 1/1. In terms of biological role, catalyzes the transfer of a methyl group from 5-methyltetrahydrofolate to homocysteine resulting in methionine formation. This Bifidobacterium adolescentis (strain ATCC 15703 / DSM 20083 / NCTC 11814 / E194a) protein is 5-methyltetrahydropteroyltriglutamate--homocysteine methyltransferase.